The primary structure comprises 189 residues: MNPVSLIFLAFAMSTDAFAAAIGKGSSLDRPRLSEALRTGIIFGVIEAITPLVGWLLGQAASQFVADWDHWIAFVLLVLLGLHMIHNGLRADHATEQEKPGQHSFWILAVTALATSIDALAVGVGLAFVDVNIFLAAGAIGLATMTMVTLGTMLGRALGAVTGKRAEMVGGVVLILVGATILYEHLSAA.

6 consecutive transmembrane segments (helical) span residues 3 to 23, 41 to 61, 65 to 85, 106 to 128, 141 to 161, and 168 to 188; these read PVSL…AAIG, IIFG…GQAA, VADW…LHMI, WILA…GLAF, GLAT…LGAV, and MVGG…HLSA.

This sequence belongs to the MntP (TC 9.B.29) family.

The protein localises to the cell inner membrane. Functionally, probably functions as a manganese efflux pump. This chain is Putative manganese efflux pump MntP, found in Pseudomonas aeruginosa (strain UCBPP-PA14).